Reading from the N-terminus, the 207-residue chain is Intraflagellar transport protein 43 homolog A (207 aa).

The segment at 1–104 is disordered; that stretch reads MDDNLQLGDS…GSDDEGDIPV (104 aa).

This sequence belongs to the IFT43 family. In terms of assembly, component of IFT complex A.

Its function is as follows. Component of IFT complex A (IFT-A) involved in retrograde ciliary transport along microtubules from the ciliary tip to the base. The sequence is that of Intraflagellar transport protein 43 homolog A (ift43a) from Salmo salar (Atlantic salmon).